We begin with the raw amino-acid sequence, 236 residues long: CHD1 helical C-terminal domain containing protein 1 (236 aa).

The segment at Met1 to Ser29 is disordered. A CHD1 helical C-terminal domain (CHCT) region spans residues Leu44–Ala145. The tract at residues Leu197–Ser236 is disordered. A compositionally biased stretch (basic and acidic residues) spans Glu198–Arg212. Residues Leu214–Lys226 show a composition bias toward basic residues. Residues Glu227–Ser236 are compositionally biased toward basic and acidic residues.

Exclusively expressed in testes.

It is found in the cytoplasm. The protein resides in the nucleus. Its function is as follows. May play a role in regulation of apoptosis. The sequence is that of CHD1 helical C-terminal domain containing protein 1 (Chct1) from Mus musculus (Mouse).